Reading from the N-terminus, the 715-residue chain is Fatty acid oxidation complex subunit alpha (715 aa).

The interval 1 to 190 (MTTTSAFMLN…KAGLVDDVVP (190 aa)) is enoyl-CoA hydratase. The segment at 306 to 715 (GPLNSVGILG…WTNGETDQGN (410 aa)) is 3-hydroxyacyl-CoA dehydrogenase.

This sequence in the N-terminal section; belongs to the enoyl-CoA hydratase/isomerase family. In the central section; belongs to the 3-hydroxyacyl-CoA dehydrogenase family. In terms of assembly, heterotetramer of two alpha chains (FadJ) and two beta chains (FadI).

It is found in the cytoplasm. The catalysed reaction is a (3S)-3-hydroxyacyl-CoA = a (2E)-enoyl-CoA + H2O. The enzyme catalyses a 4-saturated-(3S)-3-hydroxyacyl-CoA = a (3E)-enoyl-CoA + H2O. It catalyses the reaction a (3S)-3-hydroxyacyl-CoA + NAD(+) = a 3-oxoacyl-CoA + NADH + H(+). It carries out the reaction (3S)-3-hydroxybutanoyl-CoA = (3R)-3-hydroxybutanoyl-CoA. Its pathway is lipid metabolism; fatty acid beta-oxidation. In terms of biological role, catalyzes the formation of a hydroxyacyl-CoA by addition of water on enoyl-CoA. Also exhibits 3-hydroxyacyl-CoA epimerase and 3-hydroxyacyl-CoA dehydrogenase activities. The protein is Fatty acid oxidation complex subunit alpha of Salmonella agona (strain SL483).